A 36-amino-acid polypeptide reads, in one-letter code: Photosystem I reaction center subunit VIII (36 aa).

The helical transmembrane segment at 6 to 28 threads the bilayer; it reads LPSIFVPXVGLVFPAIAMASXFL.

Belongs to the PsaI family.

The protein resides in the plastid. The protein localises to the chloroplast thylakoid membrane. Functionally, may help in the organization of the PsaL subunit. The chain is Photosystem I reaction center subunit VIII from Acorus gramineus (Dwarf sweet flag).